The following is a 360-amino-acid chain: Peptide chain release factor 1 (360 aa).

The residue at position 235 (Q235) is an N5-methylglutamine. The interval 285–314 (KRQQAEASTRRNLLGSGDRSDRNRTYNFPQ) is disordered.

Belongs to the prokaryotic/mitochondrial release factor family. Methylated by PrmC. Methylation increases the termination efficiency of RF1.

The protein localises to the cytoplasm. In terms of biological role, peptide chain release factor 1 directs the termination of translation in response to the peptide chain termination codons UAG and UAA. The protein is Peptide chain release factor 1 of Klebsiella pneumoniae subsp. pneumoniae (strain ATCC 700721 / MGH 78578).